The primary structure comprises 149 residues: Transcriptional repressor NrdR (149 aa).

A zinc finger lies at cysteine 3–cysteine 34. The region spanning proline 49 to glutamate 139 is the ATP-cone domain.

Belongs to the NrdR family. Zn(2+) is required as a cofactor.

In terms of biological role, negatively regulates transcription of bacterial ribonucleotide reductase nrd genes and operons by binding to NrdR-boxes. The chain is Transcriptional repressor NrdR from Shewanella sediminis (strain HAW-EB3).